The following is a 265-amino-acid chain: MKELHKTSFLESLLIQKRVIGALLMREIITRYGRNNIGFLWLFVEPLLLTLVMVLMWKFFRMHNVSALNIVAFTLTGYPMMMMWRNASNHAIGSISANTSLLYHRNVRVLDTIFARMLLEIAGATIAQVVIMFALVIIGWIDVPADIFYMLLAWLLMAMFAVGLGLVICSVAFHFEPFGKVWSTISFVMMPLSGVFFFVHNLPQQLQHYVLMIPMVHGTEMFRAGYFGDSVTTYENPWYILLCNLVLLLLGLAVVARFSKGVEPQ.

Helical transmembrane passes span I37 to W57, N64 to W84, I121 to I141, I147 to V167, F178 to F198, and N236 to A256. The ABC transmembrane type-2 domain occupies I37–F258.

Belongs to the ABC-2 integral membrane protein family.

The protein localises to the cell inner membrane. Functionally, may form an ATP-driven capsule polysaccharide export apparatus, in association with the CtrB and CtrD proteins. This is Capsule polysaccharide export inner-membrane protein CtrC (ctrC) from Neisseria meningitidis serogroup A / serotype 4A (strain DSM 15465 / Z2491).